Consider the following 393-residue polypeptide: Phospho-N-acetylmuramoyl-pentapeptide-transferase (393 aa).

10 helical membrane-spanning segments follow: residues 29-49, 75-95, 101-121, 138-158, 194-214, 226-246, 263-283, 290-310, 315-335, and 370-390; these read RAVMSAMTALLLGLVFGPWVI, TPTMGGVLILLSIAVSTLLWF, FVWVVMLVTFGFGAIGWVDDW, YLWQSLIGLVAAIYLAFSVSE, VSYPLGVFGFIFLTYFVIVGA, GLAIMPVVLVGSALGLFAYVT, AGELLIFCAAMAGAGLAFLWF, VFMGDVGALALGGALGTIAVI, IVLGIMGGIFVVEALSVMAQV, and QVVVRFWIITMLLCLVGLSTL.

Belongs to the glycosyltransferase 4 family. MraY subfamily. Requires Mg(2+) as cofactor.

Its subcellular location is the cell inner membrane. The enzyme catalyses UDP-N-acetyl-alpha-D-muramoyl-L-alanyl-gamma-D-glutamyl-meso-2,6-diaminopimeloyl-D-alanyl-D-alanine + di-trans,octa-cis-undecaprenyl phosphate = di-trans,octa-cis-undecaprenyl diphospho-N-acetyl-alpha-D-muramoyl-L-alanyl-D-glutamyl-meso-2,6-diaminopimeloyl-D-alanyl-D-alanine + UMP. The protein operates within cell wall biogenesis; peptidoglycan biosynthesis. Functionally, catalyzes the initial step of the lipid cycle reactions in the biosynthesis of the cell wall peptidoglycan: transfers peptidoglycan precursor phospho-MurNAc-pentapeptide from UDP-MurNAc-pentapeptide onto the lipid carrier undecaprenyl phosphate, yielding undecaprenyl-pyrophosphoryl-MurNAc-pentapeptide, known as lipid I. This chain is Phospho-N-acetylmuramoyl-pentapeptide-transferase, found in Leptothrix cholodnii (strain ATCC 51168 / LMG 8142 / SP-6) (Leptothrix discophora (strain SP-6)).